The chain runs to 229 residues: Triosephosphate isomerase (229 aa).

Position 9 to 11 (9 to 11 (NYK)) interacts with substrate. The Electrophile role is filled by His-93. The active-site Proton acceptor is Glu-141. Substrate is bound by residues Ile-146, Gly-180, and 201-202 (AS).

Belongs to the triosephosphate isomerase family. In terms of assembly, homotetramer; dimer of dimers.

The protein localises to the cytoplasm. The catalysed reaction is D-glyceraldehyde 3-phosphate = dihydroxyacetone phosphate. The protein operates within carbohydrate biosynthesis; gluconeogenesis. Its pathway is carbohydrate degradation; glycolysis; D-glyceraldehyde 3-phosphate from glycerone phosphate: step 1/1. Its function is as follows. Involved in the gluconeogenesis. Catalyzes stereospecifically the conversion of dihydroxyacetone phosphate (DHAP) to D-glyceraldehyde-3-phosphate (G3P). The protein is Triosephosphate isomerase of Sulfurisphaera tokodaii (strain DSM 16993 / JCM 10545 / NBRC 100140 / 7) (Sulfolobus tokodaii).